We begin with the raw amino-acid sequence, 304 residues long: Aspartate carbamoyltransferase catalytic subunit (304 aa).

Carbamoyl phosphate-binding residues include arginine 49 and threonine 50. Lysine 77 is an L-aspartate binding site. Carbamoyl phosphate-binding residues include arginine 99, histidine 127, and glutamine 130. 2 residues coordinate L-aspartate: arginine 160 and arginine 211. Carbamoyl phosphate-binding residues include alanine 252 and proline 253.

This sequence belongs to the aspartate/ornithine carbamoyltransferase superfamily. ATCase family. In terms of assembly, heterododecamer (2C3:3R2) of six catalytic PyrB chains organized as two trimers (C3), and six regulatory PyrI chains organized as three dimers (R2).

The enzyme catalyses carbamoyl phosphate + L-aspartate = N-carbamoyl-L-aspartate + phosphate + H(+). Its pathway is pyrimidine metabolism; UMP biosynthesis via de novo pathway; (S)-dihydroorotate from bicarbonate: step 2/3. In terms of biological role, catalyzes the condensation of carbamoyl phosphate and aspartate to form carbamoyl aspartate and inorganic phosphate, the committed step in the de novo pyrimidine nucleotide biosynthesis pathway. The polypeptide is Aspartate carbamoyltransferase catalytic subunit (Bacillus cereus (strain ZK / E33L)).